The primary structure comprises 255 residues: MSLAVRVIPCLDVDAGRVVKGVNFLDLRDAGDPVERAAAYDRAGADELTFLDVTASVSDRGTMLDVVRRTAESVFIPLTVGGGVRQVSDVDALLRAGADKVGVNTAAIARPELIAEIADRFGRQVLVLSLDVRRASSGTTASGFEVTTHGGRRGAGIDAIDWARRGAELGAGEILLNSMSADGTKTGFDLELIRAVRAVVNVPVVASGGAGAAGHFPPAIDAGADAVLAASVFHFGELTVGEVKDALRGKGHPVR.

Active-site residues include aspartate 12 and aspartate 131.

The protein belongs to the HisA/HisF family. As to quaternary structure, heterodimer of HisH and HisF.

It is found in the cytoplasm. It catalyses the reaction 5-[(5-phospho-1-deoxy-D-ribulos-1-ylimino)methylamino]-1-(5-phospho-beta-D-ribosyl)imidazole-4-carboxamide + L-glutamine = D-erythro-1-(imidazol-4-yl)glycerol 3-phosphate + 5-amino-1-(5-phospho-beta-D-ribosyl)imidazole-4-carboxamide + L-glutamate + H(+). It functions in the pathway amino-acid biosynthesis; L-histidine biosynthesis; L-histidine from 5-phospho-alpha-D-ribose 1-diphosphate: step 5/9. Functionally, IGPS catalyzes the conversion of PRFAR and glutamine to IGP, AICAR and glutamate. The HisF subunit catalyzes the cyclization activity that produces IGP and AICAR from PRFAR using the ammonia provided by the HisH subunit. This chain is Imidazole glycerol phosphate synthase subunit HisF, found in Salinispora tropica (strain ATCC BAA-916 / DSM 44818 / JCM 13857 / NBRC 105044 / CNB-440).